Consider the following 197-residue polypeptide: Holliday junction branch migration complex subunit RuvA (197 aa).

The segment at 1–64 is domain I; the sequence is MIDSIVGTIQ…LSELECYGFL (64 aa). The segment at 65–143 is domain II; sequence TREERELFLK…KEFKVASTSG (79 aa). The segment at 144–152 is flexible linker; that stretch reads TEEKTYEKL. A domain III region spans residues 152-197; sequence LEEISLALLSLGYEIDEINQVLSSEDFSELSLEDGIKLALKKLSKI.

It belongs to the RuvA family. In terms of assembly, homotetramer. Forms an RuvA(8)-RuvB(12)-Holliday junction (HJ) complex. HJ DNA is sandwiched between 2 RuvA tetramers; dsDNA enters through RuvA and exits via RuvB. An RuvB hexamer assembles on each DNA strand where it exits the tetramer. Each RuvB hexamer is contacted by two RuvA subunits (via domain III) on 2 adjacent RuvB subunits; this complex drives branch migration. In the full resolvosome a probable DNA-RuvA(4)-RuvB(12)-RuvC(2) complex forms which resolves the HJ.

The protein resides in the cytoplasm. In terms of biological role, the RuvA-RuvB-RuvC complex processes Holliday junction (HJ) DNA during genetic recombination and DNA repair, while the RuvA-RuvB complex plays an important role in the rescue of blocked DNA replication forks via replication fork reversal (RFR). RuvA specifically binds to HJ cruciform DNA, conferring on it an open structure. The RuvB hexamer acts as an ATP-dependent pump, pulling dsDNA into and through the RuvAB complex. HJ branch migration allows RuvC to scan DNA until it finds its consensus sequence, where it cleaves and resolves the cruciform DNA. The sequence is that of Holliday junction branch migration complex subunit RuvA from Caldicellulosiruptor saccharolyticus (strain ATCC 43494 / DSM 8903 / Tp8T 6331).